Reading from the N-terminus, the 248-residue chain is Protein G1-like6 (248 aa).

The span at Met-1–Met-15 shows a compositional bias: basic residues. Disordered stretches follow at residues Met-1–Gln-35, Gly-50–Gln-84, and Ala-198–Pro-248. Positions Ser-17–Gly-32 are enriched in gly residues. The span at Gly-50–Gly-59 shows a compositional bias: low complexity. The span at Thr-60 to Pro-69 shows a compositional bias: gly residues. Low complexity predominate over residues Ser-70–Ser-79. The ALOG domain occupies Arg-80 to Lys-207. Positions Lys-205–Lys-209 match the Nuclear localization signal motif. Low complexity-rich tracts occupy residues Ser-212–Gly-224 and Thr-239–Pro-248.

The protein belongs to the plant homeotic and developmental regulators ALOG protein family.

Its subcellular location is the nucleus. Its function is as follows. Probable transcription regulator that acts as a developmental regulator by promoting cell growth in response to light. This chain is Protein G1-like6, found in Oryza sativa subsp. indica (Rice).